Reading from the N-terminus, the 76-residue chain is Small ribosomal subunit protein bS18 (76 aa).

Belongs to the bacterial ribosomal protein bS18 family. In terms of assembly, part of the 30S ribosomal subunit. Forms a tight heterodimer with protein bS6.

Binds as a heterodimer with protein bS6 to the central domain of the 16S rRNA, where it helps stabilize the platform of the 30S subunit. The sequence is that of Small ribosomal subunit protein bS18 from Nitrosomonas eutropha (strain DSM 101675 / C91 / Nm57).